The primary structure comprises 192 residues: Ubiquitin-conjugating enzyme E2 1 (192 aa).

Positions 1–28 (MTTPSRRRLMRDFKKLQEDPPAGVSGAP) are disordered. Residues 4–150 (PSRRRLMRDF…VQQIVEQSWL (147 aa)) enclose the UBC core domain. Cys-88 (glycyl thioester intermediate) is an active-site residue. Positions 171 to 192 (AAPGANDADDDRMDEGASGSNA) are disordered.

It belongs to the ubiquitin-conjugating enzyme family. As to quaternary structure, interacts with ubr-1 and rfp-1. Interacts with ubc-13.

The enzyme catalyses S-ubiquitinyl-[E1 ubiquitin-activating enzyme]-L-cysteine + [E2 ubiquitin-conjugating enzyme]-L-cysteine = [E1 ubiquitin-activating enzyme]-L-cysteine + S-ubiquitinyl-[E2 ubiquitin-conjugating enzyme]-L-cysteine.. It functions in the pathway protein modification; protein ubiquitination. Functionally, catalyzes the covalent attachment of ubiquitin to other proteins. This chain is Ubiquitin-conjugating enzyme E2 1 (ubc-1), found in Caenorhabditis elegans.